A 310-amino-acid chain; its full sequence is Methionyl-tRNA formyltransferase (310 aa).

(6S)-5,6,7,8-tetrahydrofolate is bound at residue 106-109; the sequence is SLLP.

Belongs to the Fmt family.

It carries out the reaction L-methionyl-tRNA(fMet) + (6R)-10-formyltetrahydrofolate = N-formyl-L-methionyl-tRNA(fMet) + (6S)-5,6,7,8-tetrahydrofolate + H(+). Functionally, attaches a formyl group to the free amino group of methionyl-tRNA(fMet). The formyl group appears to play a dual role in the initiator identity of N-formylmethionyl-tRNA by promoting its recognition by IF2 and preventing the misappropriation of this tRNA by the elongation apparatus. The chain is Methionyl-tRNA formyltransferase from Fervidobacterium nodosum (strain ATCC 35602 / DSM 5306 / Rt17-B1).